Here is a 288-residue protein sequence, read N- to C-terminus: 4-hydroxybenzoate octaprenyltransferase (288 aa).

6 helical membrane passes run 20-40 (IGTL…AGGL), 43-63 (LKVF…GCII), 96-116 (LFVV…PLVV), 210-230 (QIIG…GMVA), 234-254 (AIYA…QKLI), and 262-282 (CFTA…ALML).

This sequence belongs to the UbiA prenyltransferase family. It depends on Mg(2+) as a cofactor.

Its subcellular location is the cell inner membrane. The enzyme catalyses all-trans-octaprenyl diphosphate + 4-hydroxybenzoate = 4-hydroxy-3-(all-trans-octaprenyl)benzoate + diphosphate. Its pathway is cofactor biosynthesis; ubiquinone biosynthesis. Its function is as follows. Catalyzes the prenylation of para-hydroxybenzoate (PHB) with an all-trans polyprenyl group. Mediates the second step in the final reaction sequence of ubiquinone-8 (UQ-8) biosynthesis, which is the condensation of the polyisoprenoid side chain with PHB, generating the first membrane-bound Q intermediate 3-octaprenyl-4-hydroxybenzoate. This Shewanella pealeana (strain ATCC 700345 / ANG-SQ1) protein is 4-hydroxybenzoate octaprenyltransferase.